A 360-amino-acid polypeptide reads, in one-letter code: Peptide chain release factor 1 (360 aa).

Residue glutamine 235 is modified to N5-methylglutamine.

It belongs to the prokaryotic/mitochondrial release factor family. In terms of processing, methylated by PrmC. Methylation increases the termination efficiency of RF1.

Its subcellular location is the cytoplasm. Functionally, peptide chain release factor 1 directs the termination of translation in response to the peptide chain termination codons UAG and UAA. The sequence is that of Peptide chain release factor 1 from Burkholderia mallei (strain NCTC 10247).